We begin with the raw amino-acid sequence, 563 residues long: MRVVAAAMLYFYIVVLAICSVGIQGIDYPSVSFNLDGAKSATYRDFLSNLRKTVATGTYEVNGLPVLRRESEVQVKSRFVLVPLTNYNGNTVTLAVDVTNLYVVAFSGNANSYFFKDATEVQKSNLFVGTKQNTLSFTGNYDNLETAANTRRESIELGPSPLDGAITSLYHGDSVARSLLVVIQMVSEAARFRYIEQEVRRSLQQATSFTPNALMLSMENNWSSMSLEIQQAGNNVSPFFGTVQLLNYDHTHRLVDNFEELYKITGIAILLFRCSSPSNDNAIRMPLDLAGEDNKYNDGETCTLRTSFTRNIVGRDGLCVDVRNGYDTDGTPLQLWPCGTQRNQRWTFDSDDTIRSMGKCMTANGLNNGSNIVIFNCSTAAENAIKWEVPIDGSIINPSSGLVMTAPRAASRTILLLEDNIYAASQGWTVTNNVKPIVASIVGYKEMCLQSNGENNGVWMEDCEATSLQQQWALYGDRTIRVNSTRGLCVTTNGYNSKDLIIILKCQGLPSQRWFFNSDGAIVNPKSRHVMDVRASNVSLREIIIFPATGNPNQQWVTQVLPS.

An N-terminal signal peptide occupies residues 1–25 (MRVVAAAMLYFYIVVLAICSVGIQG). Glutamate 188 is an active-site residue. The N-linked (GlcNAc...) asparagine glycan is linked to asparagine 221. Disulfide bonds link cysteine 274–cysteine 302, cysteine 319–cysteine 338, and cysteine 360–cysteine 377. Ricin B-type lectin domains lie at 305 to 431 (RTSF…WTVT) and 434 to 559 (VKPI…WVTQ). Residues 316 to 356 (DGLCVDVRNGYDTDGTPLQLWPCGTQRNQRWTFDSDDTIRS) form a 1-alpha repeat. Residues 357-397 (MGKCMTANGLNNGSNIVIFNCSTAAENAIKWEVPIDGSIIN) form a 1-beta repeat. Residues asparagine 368 and asparagine 376 are each glycosylated (N-linked (GlcNAc...) asparagine). The stretch at 400 to 432 (SGLVMTAPRAASRTILLLEDNIYAASQGWTVTN) is one 1-gamma repeat. One copy of the 2-alpha repeat lies at 445–482 (KEMCLQSNGENNGVWMEDCEATSLQQQWALYGDRTIRV). A disulfide bridge connects residues cysteine 448 and cysteine 463. N-linked (GlcNAc...) asparagine glycosylation occurs at asparagine 483. A 2-beta repeat occupies 486–524 (RGLCVTTNGYNSKDLIIILKCQGLPSQRWFFNSDGAIVN). Cysteine 489 and cysteine 506 are joined by a disulfide. A 2-gamma repeat occupies 527 to 554 (SRHVMDVRASNVSLREIIIFPATGNPNQ). A glycan (N-linked (GlcNAc...) asparagine) is linked at asparagine 537.

The protein in the N-terminal section; belongs to the ribosome-inactivating protein family. Type 2 RIP subfamily. In terms of assembly, disulfide-linked dimer of A and B chains.

The catalysed reaction is Endohydrolysis of the N-glycosidic bond at one specific adenosine on the 28S rRNA.. Its function is as follows. Non-toxic type 2 RIP which strongly inhibits mammalian protein synthesis but does not affect plant nor bacterial protein synthesis. The A chain is responsible for inhibiting protein synthesis through the catalytic inactivation of 60S ribosomal subunits by removing adenine from position 4,324 of 28S rRNA. The B chain is a galactose-specific lectin that facilitates the binding of nigrin b to the cell membrane that precedes endocytosis. The polypeptide is Nigrin b (Sambucus nigra (European elder)).